The following is a 316-amino-acid chain: Porphobilinogen deaminase (316 aa).

Cys-249 is modified (S-(dipyrrolylmethanemethyl)cysteine).

It belongs to the HMBS family. Monomer. Dipyrromethane is required as a cofactor.

The catalysed reaction is 4 porphobilinogen + H2O = hydroxymethylbilane + 4 NH4(+). Its pathway is porphyrin-containing compound metabolism; protoporphyrin-IX biosynthesis; coproporphyrinogen-III from 5-aminolevulinate: step 2/4. Its function is as follows. Tetrapolymerization of the monopyrrole PBG into the hydroxymethylbilane pre-uroporphyrinogen in several discrete steps. This chain is Porphobilinogen deaminase, found in Nitrobacter winogradskyi (strain ATCC 25391 / DSM 10237 / CIP 104748 / NCIMB 11846 / Nb-255).